Here is a 305-residue protein sequence, read N- to C-terminus: tRNA pseudouridine synthase B (305 aa).

Residue Asp48 is the Nucleophile of the active site.

It belongs to the pseudouridine synthase TruB family. Type 1 subfamily.

It carries out the reaction uridine(55) in tRNA = pseudouridine(55) in tRNA. Functionally, responsible for synthesis of pseudouridine from uracil-55 in the psi GC loop of transfer RNAs. The sequence is that of tRNA pseudouridine synthase B from Stutzerimonas stutzeri (strain A1501) (Pseudomonas stutzeri).